The chain runs to 111 residues: Class I hydrophobin 2 (111 aa).

The signal sequence occupies residues 1–21; the sequence is MFSRVMFCTFLILPLLAAATA. 4 disulfides stabilise this stretch: Cys-30–Cys-90, Cys-37–Cys-84, Cys-38–Cys-71, and Cys-91–Cys-104.

It belongs to the fungal hydrophobin family. As to quaternary structure, self-assembles to form functional amyloid fibrils called rodlets. Self-assembly into fibrillar rodlets occurs spontaneously at hydrophobic:hydrophilic interfaces and the rodlets further associate laterally to form amphipathic monolayers. Behavior depends on environmental conditions: (1) when the pH increases or in the presence of Ca(2+) ions, an assembled state, beta-sheet rich, is formed; (2) when the solvent polarity increases, the vhm2 shows an increased tendency to reach hydrophobic/hydrophilic interfaces, with no detectable conformational change; and (3) at high temperature, a reversible conformational change and reversible aggregation occur. The physical and chemical properties, both in solution and as a biofilm, are affected by polysaccharides that act as hydrophilic stabilizer.

It localises to the secreted. It is found in the cell wall. Aerial growth, conidiation, and dispersal of filamentous fungi in the environment rely upon a capability of their secreting small amphipathic proteins called hydrophobins (HPBs) with low sequence identity. Class I can self-assemble into an outermost layer of rodlet bundles on aerial cell surfaces, conferring cellular hydrophobicity that supports fungal growth, development and dispersal; whereas Class II form highly ordered films at water-air interfaces through intermolecular interactions but contribute nothing to the rodlet structure. Vmh2 is a class I hydrophobin involved in biofilm formation and is essential for the maintenance of the surface hydrophobicity of the mycelium. Seems not to be involved in hyphal resistance against environmental stress. The polypeptide is Class I hydrophobin 2 (Pleurotus ostreatus (strain PC15) (Oyster mushroom)).